The chain runs to 427 residues: Enolase (427 aa).

Residue Gln163 participates in (2R)-2-phosphoglycerate binding. Catalysis depends on Glu205, which acts as the Proton donor. 3 residues coordinate Mg(2+): Asp242, Glu287, and Asp314. Residues Lys339, Arg368, Ser369, and Lys390 each contribute to the (2R)-2-phosphoglycerate site. Catalysis depends on Lys339, which acts as the Proton acceptor.

This sequence belongs to the enolase family. Requires Mg(2+) as cofactor.

It is found in the cytoplasm. The protein resides in the secreted. The protein localises to the cell surface. It carries out the reaction (2R)-2-phosphoglycerate = phosphoenolpyruvate + H2O. The protein operates within carbohydrate degradation; glycolysis; pyruvate from D-glyceraldehyde 3-phosphate: step 4/5. Functionally, catalyzes the reversible conversion of 2-phosphoglycerate (2-PG) into phosphoenolpyruvate (PEP). It is essential for the degradation of carbohydrates via glycolysis. This Solibacter usitatus (strain Ellin6076) protein is Enolase.